The primary structure comprises 303 residues: Glycine--tRNA ligase alpha subunit (303 aa).

Belongs to the class-II aminoacyl-tRNA synthetase family. Tetramer of two alpha and two beta subunits.

The protein resides in the cytoplasm. The catalysed reaction is tRNA(Gly) + glycine + ATP = glycyl-tRNA(Gly) + AMP + diphosphate. The polypeptide is Glycine--tRNA ligase alpha subunit (Salmonella arizonae (strain ATCC BAA-731 / CDC346-86 / RSK2980)).